The following is a 1169-amino-acid chain: Chromosome partition protein Smc (1169 aa).

Residue 32 to 39 (PNGCGKSN) participates in ATP binding. 2 coiled-coil regions span residues 170 to 507 (ISKY…ALGE) and 659 to 1030 (REQQ…FQSL).

This sequence belongs to the SMC family. In terms of assembly, homodimer.

The protein resides in the cytoplasm. Functionally, required for chromosome condensation and partitioning. The protein is Chromosome partition protein Smc of Coxiella burnetii (strain RSA 493 / Nine Mile phase I).